The primary structure comprises 206 residues: Large ribosomal subunit protein uL4 (206 aa).

Residues 45 to 78 (QGNRAQKDREQVKHTTKKPWRQKGTGRARAGMSS) form a disordered region. Basic residues predominate over residues 58-70 (HTTKKPWRQKGTG).

It belongs to the universal ribosomal protein uL4 family. As to quaternary structure, part of the 50S ribosomal subunit.

One of the primary rRNA binding proteins, this protein initially binds near the 5'-end of the 23S rRNA. It is important during the early stages of 50S assembly. It makes multiple contacts with different domains of the 23S rRNA in the assembled 50S subunit and ribosome. Functionally, forms part of the polypeptide exit tunnel. The sequence is that of Large ribosomal subunit protein uL4 from Burkholderia ambifaria (strain MC40-6).